The sequence spans 264 residues: Endonuclease V (264 aa).

2 residues coordinate Mg(2+): D72 and D137.

The protein belongs to the endonuclease V family. The cofactor is Mg(2+).

Its subcellular location is the cytoplasm. It carries out the reaction Endonucleolytic cleavage at apurinic or apyrimidinic sites to products with a 5'-phosphate.. DNA repair enzyme involved in the repair of deaminated bases. Selectively cleaves double-stranded DNA at the second phosphodiester bond 3' to a deoxyinosine leaving behind the intact lesion on the nicked DNA. The sequence is that of Endonuclease V from Halobacterium salinarum (strain ATCC 700922 / JCM 11081 / NRC-1) (Halobacterium halobium).